The sequence spans 53 residues: Small ribosomal subunit protein uS14 (53 aa).

Zn(2+) is bound by residues C17, C20, C36, and C39.

This sequence belongs to the universal ribosomal protein uS14 family. Zinc-binding uS14 subfamily. As to quaternary structure, part of the 30S ribosomal subunit. The cofactor is Zn(2+).

Functionally, binds 16S rRNA, required for the assembly of 30S particles. In Methanocaldococcus jannaschii (strain ATCC 43067 / DSM 2661 / JAL-1 / JCM 10045 / NBRC 100440) (Methanococcus jannaschii), this protein is Small ribosomal subunit protein uS14.